A 591-amino-acid chain; its full sequence is Tricyclene synthase, chloroplastic (591 aa).

The transit peptide at 1–45 (MATLLQIGSGVIYSNALRKTLRRPQSSTCIIVTETTPCNKSPTVQ) directs the protein to the chloroplast. (2E)-geranyl diphosphate contacts are provided by Arg302, Asp339, Asp343, Arg481, and Asn484. The Mg(2+) site is built by Asp339 and Asp343. Positions 339–343 (DDIYD) match the DDXXD motif motif. Residues Asn484, Thr488, and Glu492 each contribute to the Mg(2+) site.

Belongs to the terpene synthase family. Tpsb subfamily. It depends on Mg(2+) as a cofactor. Mn(2+) serves as cofactor. As to expression, predominantly expressed in flowers but also in leaves, siliques and in stems.

It localises to the plastid. The protein localises to the chloroplast stroma. The catalysed reaction is (2E)-geranyl diphosphate = beta-myrcene + diphosphate. The enzyme catalyses (2E)-geranyl diphosphate = tricyclene + diphosphate. It carries out the reaction (2E)-geranyl diphosphate = (E)-beta-ocimene + diphosphate. It functions in the pathway secondary metabolite biosynthesis; terpenoid biosynthesis. Involved in monoterpene (C10) biosynthesis. The major product is beta-myrcene (56%) followed by (E)-beta-ocimene (20%) and minor amounts (less than 5%) of the cyclic monoterpene (-)-limonene, (+)-limonene, 2-carene and tricyclene. This chain is Tricyclene synthase, chloroplastic, found in Arabidopsis thaliana (Mouse-ear cress).